A 1233-amino-acid polypeptide reads, in one-letter code: NACHT, LRR and PYD domains-containing protein 1b allele 1 (1233 aa).

Residues 1-22 (MEESPPKQKSNTKVAQHEGQQD) form a disordered region. Residues 126–435 (QLVIIEGAAG…EFFAAISCIL (310 aa)) form the NACHT domain. An ATP-binding site is contributed by 132-139 (GAAGIGKS). 2 LRR repeats span residues 627 to 647 (NLEG…QSLC) and 684 to 704 (SLTE…RMLC). Residues 850-983 (FWGPIGPVAT…GYTVLKNPSF (134 aa)) form a ZU5 region. Residues 850-1133 (FWGPIGPVAT…LRPALPRIAQ (284 aa)) enclose the FIIND domain. Positions 984–1133 (SPMGVVLRII…LRPALPRIAQ (150 aa)) are UPA. The 84-residue stretch at 1143-1226 (HFMDQHREQL…HLVMDLLEKS (84 aa)) folds into the CARD domain.

Belongs to the NLRP family. As to quaternary structure, interacts with DPP9; leading to inhibit activation of the inflammasome. DPP9 acts via formation of a ternary complex, composed of a DPP9 homodimer, one full-length Nlrp1b protein, and one cleaved C-terminus of Nlrp1b (NACHT, LRR and PYD domains-containing protein 1b, C-terminus). Interacts with DPP8; leading to inhibit activation of the inflammasome, probably via formation of a ternary complex with DPP8. Interacts (via LRR repeats) with BCL2 and BCL2L1 (via the loop between motifs BH4 and BH3). Interacts with NOD2; this interaction may increase IL1B release. Interacts with EIF2AK2/PKR; this interaction requires EIF2AK2 activity, is accompanied by EIF2AK2 autophosphorylation and promotes inflammasome assembly in response to B.anthracis lethal toxin. Interacts with MEFV; this interaction targets Nlrp1b to degradation by autophagy, hence preventing excessive IL1B- and IL18-mediated inflammation. Interacts with the C-terminal part of Nlrp1b (NACHT, LRR and PYD domains-containing protein 1b, C-terminus) in absence of pathogens and other damage-associated signals. In terms of assembly, interacts with the N-terminal part of Nlrp1b (NACHT, LRR and PYD domains-containing protein 1b, N-terminus) in absence of pathogens and other damage-associated signals. Homomultimer; forms the Nlrp1b inflammasome polymeric complex, a filament composed of homopolymers of this form in response to pathogens and other damage-associated signals. The Nlrp1b inflammasome polymeric complex directly recruits pro-caspase-1 (proCASP1) independently of PYCARD/ASC. Interacts (via CARD domain) with CASP1 (via CARD domain); leading to CASP1 activation. Autocatalytically cleaved. Autocatalytic cleavage in FIIND region occurs constitutively, prior to activation signals, and is required for inflammasome activity (IL1B release), possibly by facilitating CASP1 binding. Both N- and C-terminal parts remain associated non-covalently. Post-translationally, ubiquitinated by UBR2, a component of the N-end rule pathway in response to pathogens and other damage-associated signals, leading to its degradation by the proteasome and subsequent release of the cleaved C-terminal part of the protein (NACHT, LRR and PYD domains-containing protein 1b, C-terminus), which polymerizes and forms the Nlrp1b inflammasome. In terms of processing, (Microbial infection) Cleavage by B.anthracis lethal toxin (LT) endopeptidase promotes ubiquitination and degradation of the N-terminal part, releasing the cleaved C-terminal part of the protein (NACHT, LRR and PYD domains-containing protein 1b, C-terminus), which polymerizes and forms the Nlrp1b inflammasome. (Microbial infection) Ubiquitinated by S.flexneri IpaH7.8, leading to its degradation by the proteasome and subsequent release of the cleaved C-terminal part of the protein (NACHT, LRR and PYD domains-containing protein 1b, C-terminus), which polymerizes and forms the Nlrp1b inflammasome. In terms of tissue distribution, widely expressed, including in macrophages.

It is found in the cytoplasm. It localises to the cytosol. The protein localises to the membrane. The protein resides in the inflammasome. Activated by cleavage by B.anthracis lethal toxin (LT) endopeptidase: cleavage by LT promotes ubiquitination and degradation of the N-terminal part, releasing the cleaved C-terminal part of the protein (NACHT, LRR and PYD domains-containing protein 1b, C-terminus), which polymerizes and forms the Nlrp1b inflammasome. Activated by S.flexneri IpaH7.8, an E3 ubiquitin ligase that mediates ubiquitination and degradation of the N-terminal part, releasing the cleaved C-terminal part of the protein, which polymerizes and forms the Nlrp1b inflammasome. Nlrp1b inflammasome is inhibited by DPP8 and DPP9, which sequester the C-terminal fragment of Nlrp1b (NACHT, LRR and PYD domains-containing protein 1b, C-terminus) in a ternary complex, thereby preventing Nlrp1b oligomerization and activation. Nlrp1b inflammasome is activated by Val-boroPro (Talabostat, PT-100), an inhibitor of dipeptidyl peptidases DPP8 and DPP9. Val-boroPro relieves inhibition of DPP8 and/or DPP9 by promoting disruption of the ternary complex, releasing its C-terminal part from autoinhibition. Activated by metabolic inhibitors, such as 2-deoxy-D-glucose and sodium azide, by nutrient deprivation and hypoxia, possibly due to a decrease in cytosolic ATP. Also activated by Toxoplasma gondii. Not activated by muramyl dipeptide, nor by full-length bacterial peptidoglycan. Contrary to its human ortholog, not activated by positive-strand RNA virus such as Semliki Forrest virus or long dsRNA. Functionally, acts as the sensor component of the Nlrp1b inflammasome, which mediates inflammasome activation in response to various pathogen-associated signals, leading to subsequent pyroptosis. Inflammasomes are supramolecular complexes that assemble in the cytosol in response to pathogens and other damage-associated signals and play critical roles in innate immunity and inflammation. Acts as a recognition receptor (PRR): recognizes specific pathogens and other damage-associated signals, such as B.anthracis lethal toxin (LT) or Val-boroPro inhibitor, and mediates the formation of the inflammasome polymeric complex. In response to pathogen-associated signals, the N-terminal part of Nlrp1b is degraded by the proteasome, releasing the cleaved C-terminal part of the protein (NACHT, LRR and PYD domains-containing protein 1b, C-terminus), which polymerizes to initiate the formation of the inflammasome complex: the inflammasome directly recruits pro-caspase-1 (proCASP1) independently of PYCARD/ASC and promotes caspase-1 (CASP1) activation, which subsequently cleaves and activates inflammatory cytokines IL1B and IL18 and gasdermin-D (GSDMD), leading to pyroptosis. In the absence of GSDMD expression, the Nlrp1b inflammasome is able to recruit and activate CASP8, leading to activation of gasdermin-E (GSDME). Activation of Nlrp1b inflammasome is also required for HMGB1 secretion; the active cytokines and HMGB1 stimulate inflammatory responses. Primary mediator of macrophage susceptibility to B.anthracis LT: in response to B.anthracis infection, macrophages and dendritic cells release IL1B and undergo pyroptosis. This early inflammatory response to the toxin increases resistance to infection by B.anthracis spores. Its function is as follows. Constitutes the precursor of the Nlrp1b inflammasome, which mediates autoproteolytic processing within the FIIND domain to generate the N-terminal and C-terminal parts, which are associated non-covalently in absence of pathogens and other damage-associated signals. Regulatory part that prevents formation of the Nlrp1b inflammasome: in absence of pathogens and other damage-associated signals, interacts with the C-terminal part of Nlrp1b (NACHT, LRR and PYD domains-containing protein 1b, C-terminus), preventing activation of the Nlrp1b inflammasome. In response to pathogen-associated signals, this part is ubiquitinated by the N-end rule pathway and degraded by the proteasome, releasing the cleaved C-terminal part of the protein, which polymerizes and forms the Nlrp1b inflammasome. In terms of biological role, constitutes the active part of the Nlrp1b inflammasome. In absence of pathogens and other damage-associated signals, interacts with the N-terminal part of Nlrp1b (NACHT, LRR and PYD domains-containing protein 1b, N-terminus), preventing activation of the Nlrp1b inflammasome. In response to pathogen-associated signals, the N-terminal part of Nlrp1b is degraded by the proteasome, releasing this form, which polymerizes to form the Nlrp1b inflammasome complex: the Nlrp1b inflammasome complex then directly recruits pro-caspase-1 (proCASP1) and promotes caspase-1 (CASP1) activation, leading to gasdermin-D (GSDMD) cleavage and subsequent pyroptosis. This chain is NACHT, LRR and PYD domains-containing protein 1b allele 1, found in Mus musculus (Mouse).